The following is a 376-amino-acid chain: Alanine racemase 1 (376 aa).

The active-site Proton acceptor; specific for D-alanine is the K40. Residue K40 is modified to N6-(pyridoxal phosphate)lysine. R138 serves as a coordination point for substrate. Residue Y268 is the Proton acceptor; specific for L-alanine of the active site. Substrate is bound at residue M316.

The protein belongs to the alanine racemase family. Requires pyridoxal 5'-phosphate as cofactor.

It carries out the reaction L-alanine = D-alanine. Its pathway is amino-acid biosynthesis; D-alanine biosynthesis; D-alanine from L-alanine: step 1/1. Functionally, catalyzes the interconversion of L-alanine and D-alanine. May also act on other amino acids. This is Alanine racemase 1 (alr1) from Oceanobacillus iheyensis (strain DSM 14371 / CIP 107618 / JCM 11309 / KCTC 3954 / HTE831).